The sequence spans 659 residues: Exoribonuclease 2 (659 aa).

The RNB domain maps to 189–531 (RENLTALHFV…NHRLIKAVLA (343 aa)). Residues 576–658 (NVEFNAEVQD…ATRSIVGEIL (83 aa)) form the S1 motif domain.

It belongs to the RNR ribonuclease family. RNase II subfamily.

The protein localises to the cytoplasm. It catalyses the reaction Exonucleolytic cleavage in the 3'- to 5'-direction to yield nucleoside 5'-phosphates.. In terms of biological role, involved in mRNA degradation. Hydrolyzes single-stranded polyribonucleotides processively in the 3' to 5' direction. In Haemophilus influenzae (strain 86-028NP), this protein is Exoribonuclease 2.